The sequence spans 392 residues: Phosphoglycerate kinase (392 aa).

Substrate contacts are provided by residues Asp21–Asn23, Arg36, His59–Arg62, Arg114, and Arg147. ATP-binding positions include Lys198, Glu320, and Gly346–Thr349.

It belongs to the phosphoglycerate kinase family. As to quaternary structure, monomer.

The protein resides in the cytoplasm. It carries out the reaction (2R)-3-phosphoglycerate + ATP = (2R)-3-phospho-glyceroyl phosphate + ADP. It participates in carbohydrate degradation; glycolysis; pyruvate from D-glyceraldehyde 3-phosphate: step 2/5. This chain is Phosphoglycerate kinase, found in Neisseria meningitidis serogroup C / serotype 2a (strain ATCC 700532 / DSM 15464 / FAM18).